The sequence spans 203 residues: Outer-membrane lipoprotein carrier protein (203 aa).

An N-terminal signal peptide occupies residues 1-21 (MKKLLVACCLLSGFASTSVLA).

It belongs to the LolA family. As to quaternary structure, monomer.

The protein localises to the periplasm. In terms of biological role, participates in the translocation of lipoproteins from the inner membrane to the outer membrane. Only forms a complex with a lipoprotein if the residue after the N-terminal Cys is not an aspartate (The Asp acts as a targeting signal to indicate that the lipoprotein should stay in the inner membrane). This chain is Outer-membrane lipoprotein carrier protein, found in Serratia proteamaculans (strain 568).